Reading from the N-terminus, the 120-residue chain is NAD(P)H-quinone oxidoreductase subunit 3, chloroplastic (120 aa).

3 consecutive transmembrane segments (helical) span residues 9–29, 64–84, and 88–108; these read IFWA…LISG, MFAL…PWAM, and VLGV…ILGL.

It belongs to the complex I subunit 3 family. NDH is composed of at least 16 different subunits, 5 of which are encoded in the nucleus.

It localises to the plastid. Its subcellular location is the chloroplast thylakoid membrane. It carries out the reaction a plastoquinone + NADH + (n+1) H(+)(in) = a plastoquinol + NAD(+) + n H(+)(out). The catalysed reaction is a plastoquinone + NADPH + (n+1) H(+)(in) = a plastoquinol + NADP(+) + n H(+)(out). Functionally, NDH shuttles electrons from NAD(P)H:plastoquinone, via FMN and iron-sulfur (Fe-S) centers, to quinones in the photosynthetic chain and possibly in a chloroplast respiratory chain. The immediate electron acceptor for the enzyme in this species is believed to be plastoquinone. Couples the redox reaction to proton translocation, and thus conserves the redox energy in a proton gradient. In Arabidopsis thaliana (Mouse-ear cress), this protein is NAD(P)H-quinone oxidoreductase subunit 3, chloroplastic.